We begin with the raw amino-acid sequence, 178 residues long: Glucagon-2 (178 aa).

Residues 1–21 form the signal peptide; the sequence is MFGIHSLAGVLLLVIVQSQLA. 3 consecutive propeptides follow at residues 83–87, 123–134, and 171–178; these read SGAPS, ESAEESMNGPMS, and SNKRQEDH.

The protein belongs to the glucagon family.

It is found in the secreted. In terms of biological role, promotes hydrolysis of glycogen and lipids, and raises the blood sugar level. In Oncorhynchus mykiss (Rainbow trout), this protein is Glucagon-2 (gcg2).